A 308-amino-acid polypeptide reads, in one-letter code: Taste receptor type 2 member 41 (308 aa).

Over 1–7 (MLPTLSV) the chain is Extracellular. Residues 8 to 28 (FFMLTFVLLCFLGILANGFIV) traverse the membrane as a helical segment. Residues 29-60 (LMLSREWLLRGRLLPSDMILFSLGTSRFFQQC) are Cytoplasmic-facing. Residues 61-81 (VGLVNSFYYFLHLVEYSGSLA) form a helical membrane-spanning segment. Topologically, residues 82 to 88 (RQLISLH) are extracellular. A helical membrane pass occupies residues 89 to 109 (WDFLNSATFWFCTWLSVLFCI). Residues 110–128 (KIANFSHPAFLWLKWRFPA) are Cytoplasmic-facing. Residues 129–149 (LVPWFLLGSILVSVIVTLLFF) form a helical membrane-spanning segment. Topologically, residues 150–186 (WGNHTIYQAFLRRKFTGNTTFKEWNRRLEIDYFMPLK) are extracellular. N152 and N167 each carry an N-linked (GlcNAc...) asparagine glycan. The helical transmembrane segment at 187 to 207 (VVTMSIPCSLFLVSILLLISS) threads the bilayer. Topologically, residues 208–239 (LRRHSLRMQHNTHSLQDPNVQAHSRALKSLIS) are cytoplasmic. A helical transmembrane segment spans residues 240-260 (FLVLYAVSFVSMIIDATVFIS). The Extracellular segment spans residues 261-264 (SDNV). Residues 265-285 (WYWPWQIILYFCMSVHPFILI) traverse the membrane as a helical segment. At 286-308 (TNNLRFRGTFRQLLLLARGFWVA) the chain is on the cytoplasmic side.

It belongs to the G-protein coupled receptor T2R family. In terms of tissue distribution, expressed in subsets of taste receptor cells of the tongue and palate epithelium and exclusively in gustducin-positive cells.

It localises to the membrane. Its function is as follows. Receptor that may play a role in the perception of bitterness and is gustducin-linked. May play a role in sensing the chemical composition of the gastrointestinal content. The activity of this receptor may stimulate alpha gustducin, mediate PLC-beta-2 activation and lead to the gating of TRPM5. This chain is Taste receptor type 2 member 41 (Tas2r41), found in Mus musculus (Mouse).